We begin with the raw amino-acid sequence, 193 residues long: Interleukin-18 (193 aa).

The propeptide occupies 1–36; that stretch reads MAAEQVEDYCISFVEMKFINNTLYFVAENDEDLESD.

The protein belongs to the IL-1 family. In terms of assembly, forms a ternary complex with ligand-binding receptor subunit IL18R1 and signaling receptor subunit IL18RAP at the plasma membrane. Mature IL18 first binds to IL18R1 forming a low affinity binary complex, which then interacts with IL18RAP to form a high affinity ternary complex that signals inside the cell. Interacts with cargo receptor TMED10; the interaction mediates the translocation from the cytoplasm into the ERGIC (endoplasmic reticulum-Golgi intermediate compartment) and thereby secretion. In terms of processing, the pro-IL-18 precursor is processed by CASP1, CASP4 or CASP5 to yield its mature, active form. The pro-IL-18 precursor features autoinhibitory interactions between the propeptide and the post-cleavage-site region, preventing recognition by the IL18R1 receptor. Processing by CASP1, CASP4 or CASP5 induces conformational changes to generate critical receptor-binding sites. The mature form is then secreted and released in the extracellular milieu by passing through the gasdermin-D (GSDMD) pore. In contrast, cleavage by CASP3 inactivates IL18.

It is found in the cytoplasm. The protein resides in the cytosol. The protein localises to the secreted. Functionally, pro-inflammatory cytokine primarily involved in epithelial barrier repair, polarized T-helper 1 (Th1) cell and natural killer (NK) cell immune responses. Upon binding to IL18R1 and IL18RAP, forms a signaling ternary complex which activates NF-kappa-B, triggering synthesis of inflammatory mediators. Synergizes with IL12/interleukin-12 to induce IFNG synthesis from T-helper 1 (Th1) cells and natural killer (NK) cells. Involved in transduction of inflammation downstream of pyroptosis: its mature form is specifically released in the extracellular milieu by passing through the gasdermin-D (GSDMD) pore. This is Interleukin-18 (IL18) from Bos taurus (Bovine).